The primary structure comprises 86 residues: Large ribosomal subunit protein bL27c (86 aa).

A disordered region spans residues Met1–Gly27.

It belongs to the bacterial ribosomal protein bL27 family.

Its subcellular location is the plastid. It localises to the chloroplast. The polypeptide is Large ribosomal subunit protein bL27c (Pyropia yezoensis (Susabi-nori)).